The following is a 490-amino-acid chain: Aspartyl/glutamyl-tRNA(Asn/Gln) amidotransferase subunit B (490 aa).

This sequence belongs to the GatB/GatE family. GatB subfamily. As to quaternary structure, heterotrimer of A, B and C subunits.

It carries out the reaction L-glutamyl-tRNA(Gln) + L-glutamine + ATP + H2O = L-glutaminyl-tRNA(Gln) + L-glutamate + ADP + phosphate + H(+). It catalyses the reaction L-aspartyl-tRNA(Asn) + L-glutamine + ATP + H2O = L-asparaginyl-tRNA(Asn) + L-glutamate + ADP + phosphate + 2 H(+). Functionally, allows the formation of correctly charged Asn-tRNA(Asn) or Gln-tRNA(Gln) through the transamidation of misacylated Asp-tRNA(Asn) or Glu-tRNA(Gln) in organisms which lack either or both of asparaginyl-tRNA or glutaminyl-tRNA synthetases. The reaction takes place in the presence of glutamine and ATP through an activated phospho-Asp-tRNA(Asn) or phospho-Glu-tRNA(Gln). This is Aspartyl/glutamyl-tRNA(Asn/Gln) amidotransferase subunit B from Prochlorococcus marinus (strain MIT 9515).